The sequence spans 65 residues: Ferredoxin-1 (65 aa).

The 4Fe-4S ferredoxin-type domain maps to 2–30 (AMKIDPELCTSCGDCEPVCPTNAIAPKKG). [4Fe-4S] cluster is bound by residues C10, C13, C16, C20, C39, C42, C51, and C55.

Requires [4Fe-4S] cluster as cofactor.

Functionally, ferredoxins are iron-sulfur proteins that transfer electrons in a wide variety of metabolic reactions. This ferredoxin probably participates in nitrogen fixation. The protein is Ferredoxin-1 (fdxN) of Rhodobacter capsulatus (Rhodopseudomonas capsulata).